The following is a 132-amino-acid chain: Fatty acid-binding protein, brain (132 aa).

Residue Val-2 is modified to N-acetylvaline. 127–129 is a binding site for a fatty acid; the sequence is RCY.

It belongs to the calycin superfamily. Fatty-acid binding protein (FABP) family. In terms of tissue distribution, expressed in brain and other neural tissues.

The protein localises to the cytoplasm. In terms of biological role, B-FABP could be involved in the transport of a so far unknown hydrophobic ligand with potential morphogenic activity during CNS development. It is required for the establishment of the radial glial fiber system in developing brain, a system that is necessary for the migration of immature neurons to establish cortical layers. In Mus musculus (Mouse), this protein is Fatty acid-binding protein, brain (Fabp7).